Consider the following 326-residue polypeptide: 4-hydroxy-3-methylbut-2-enyl diphosphate reductase 1 (326 aa).

Cys27 is a [4Fe-4S] cluster binding site. Residues His56 and His89 each coordinate (2E)-4-hydroxy-3-methylbut-2-enyl diphosphate. Dimethylallyl diphosphate contacts are provided by His56 and His89. 2 residues coordinate isopentenyl diphosphate: His56 and His89. A [4Fe-4S] cluster-binding site is contributed by Cys111. His139 is a binding site for (2E)-4-hydroxy-3-methylbut-2-enyl diphosphate. Residue His139 participates in dimethylallyl diphosphate binding. His139 contacts isopentenyl diphosphate. Glu141 functions as the Proton donor in the catalytic mechanism. (2E)-4-hydroxy-3-methylbut-2-enyl diphosphate is bound at residue Thr179. Position 209 (Cys209) interacts with [4Fe-4S] cluster. Positions 237, 238, 239, and 281 each coordinate (2E)-4-hydroxy-3-methylbut-2-enyl diphosphate. Residues Ser237, Ser238, Asn239, and Ser281 each contribute to the dimethylallyl diphosphate site. Ser237, Ser238, Asn239, and Ser281 together coordinate isopentenyl diphosphate.

This sequence belongs to the IspH family. [4Fe-4S] cluster serves as cofactor.

It carries out the reaction isopentenyl diphosphate + 2 oxidized [2Fe-2S]-[ferredoxin] + H2O = (2E)-4-hydroxy-3-methylbut-2-enyl diphosphate + 2 reduced [2Fe-2S]-[ferredoxin] + 2 H(+). The enzyme catalyses dimethylallyl diphosphate + 2 oxidized [2Fe-2S]-[ferredoxin] + H2O = (2E)-4-hydroxy-3-methylbut-2-enyl diphosphate + 2 reduced [2Fe-2S]-[ferredoxin] + 2 H(+). It functions in the pathway isoprenoid biosynthesis; dimethylallyl diphosphate biosynthesis; dimethylallyl diphosphate from (2E)-4-hydroxy-3-methylbutenyl diphosphate: step 1/1. The protein operates within isoprenoid biosynthesis; isopentenyl diphosphate biosynthesis via DXP pathway; isopentenyl diphosphate from 1-deoxy-D-xylulose 5-phosphate: step 6/6. Catalyzes the conversion of 1-hydroxy-2-methyl-2-(E)-butenyl 4-diphosphate (HMBPP) into a mixture of isopentenyl diphosphate (IPP) and dimethylallyl diphosphate (DMAPP). Acts in the terminal step of the DOXP/MEP pathway for isoprenoid precursor biosynthesis. The sequence is that of 4-hydroxy-3-methylbut-2-enyl diphosphate reductase 1 from Burkholderia pseudomallei (strain K96243).